The following is a 297-amino-acid chain: Phosphatidylserine decarboxylase proenzyme (297 aa).

Residues Asp100, His157, and Ser263 each act as charge relay system; for autoendoproteolytic cleavage activity in the active site. Ser263 acts as the Schiff-base intermediate with substrate; via pyruvic acid; for decarboxylase activity in catalysis. Ser263 carries the pyruvic acid (Ser); by autocatalysis modification.

This sequence belongs to the phosphatidylserine decarboxylase family. PSD-B subfamily. Prokaryotic type I sub-subfamily. As to quaternary structure, heterodimer of a large membrane-associated beta subunit and a small pyruvoyl-containing alpha subunit. Pyruvate is required as a cofactor. Is synthesized initially as an inactive proenzyme. Formation of the active enzyme involves a self-maturation process in which the active site pyruvoyl group is generated from an internal serine residue via an autocatalytic post-translational modification. Two non-identical subunits are generated from the proenzyme in this reaction, and the pyruvate is formed at the N-terminus of the alpha chain, which is derived from the carboxyl end of the proenzyme. The autoendoproteolytic cleavage occurs by a canonical serine protease mechanism, in which the side chain hydroxyl group of the serine supplies its oxygen atom to form the C-terminus of the beta chain, while the remainder of the serine residue undergoes an oxidative deamination to produce ammonia and the pyruvoyl prosthetic group on the alpha chain. During this reaction, the Ser that is part of the protease active site of the proenzyme becomes the pyruvoyl prosthetic group, which constitutes an essential element of the active site of the mature decarboxylase.

The protein resides in the cell membrane. The enzyme catalyses a 1,2-diacyl-sn-glycero-3-phospho-L-serine + H(+) = a 1,2-diacyl-sn-glycero-3-phosphoethanolamine + CO2. The protein operates within phospholipid metabolism; phosphatidylethanolamine biosynthesis; phosphatidylethanolamine from CDP-diacylglycerol: step 2/2. In terms of biological role, catalyzes the formation of phosphatidylethanolamine (PtdEtn) from phosphatidylserine (PtdSer). The chain is Phosphatidylserine decarboxylase proenzyme from Haemophilus ducreyi (strain 35000HP / ATCC 700724).